A 176-amino-acid polypeptide reads, in one-letter code: Putative phosphohydrolase YueE (176 aa).

Positions 23-139 constitute an HD domain; sequence GVAHAIACAY…VKKADELDEE (117 aa).

The polypeptide is Putative phosphohydrolase YueE (yueE) (Bacillus subtilis (strain 168)).